Reading from the N-terminus, the 153-residue chain is D-aminoacyl-tRNA deacylase (153 aa).

Residues Gly142–Pro143 carry the Gly-cisPro motif, important for rejection of L-amino acids motif.

The protein belongs to the DTD family. In terms of assembly, homodimer.

The protein localises to the cytoplasm. It carries out the reaction glycyl-tRNA(Ala) + H2O = tRNA(Ala) + glycine + H(+). The catalysed reaction is a D-aminoacyl-tRNA + H2O = a tRNA + a D-alpha-amino acid + H(+). An aminoacyl-tRNA editing enzyme that deacylates mischarged D-aminoacyl-tRNAs. Also deacylates mischarged glycyl-tRNA(Ala), protecting cells against glycine mischarging by AlaRS. Acts via tRNA-based rather than protein-based catalysis; rejects L-amino acids rather than detecting D-amino acids in the active site. By recycling D-aminoacyl-tRNA to D-amino acids and free tRNA molecules, this enzyme counteracts the toxicity associated with the formation of D-aminoacyl-tRNA entities in vivo and helps enforce protein L-homochirality. In Acidovorax ebreus (strain TPSY) (Diaphorobacter sp. (strain TPSY)), this protein is D-aminoacyl-tRNA deacylase.